We begin with the raw amino-acid sequence, 463 residues long: D-inositol 3-phosphate glycosyltransferase (463 aa).

Histidine 40 is a binding site for 1D-myo-inositol 3-phosphate. UDP-N-acetyl-alpha-D-glucosamine is bound by residues 46-47 (QP) and glycine 54. 1D-myo-inositol 3-phosphate contacts are provided by residues 51 to 56 (DAGGMN), lysine 109, tyrosine 142, threonine 166, and arginine 186. UDP-N-acetyl-alpha-D-glucosamine contacts are provided by arginine 260, lysine 265, and glutamine 318. Positions 327, 328, and 330 each coordinate Mg(2+). UDP-N-acetyl-alpha-D-glucosamine is bound by residues glutamate 340 and glutamate 348. Residue threonine 354 coordinates Mg(2+). Positions 443–463 (VRDPVAARKPRRWTARRGVGA) are disordered.

Belongs to the glycosyltransferase group 1 family. MshA subfamily. In terms of assembly, homodimer.

It carries out the reaction 1D-myo-inositol 3-phosphate + UDP-N-acetyl-alpha-D-glucosamine = 1D-myo-inositol 2-acetamido-2-deoxy-alpha-D-glucopyranoside 3-phosphate + UDP + H(+). Functionally, catalyzes the transfer of a N-acetyl-glucosamine moiety to 1D-myo-inositol 3-phosphate to produce 1D-myo-inositol 2-acetamido-2-deoxy-glucopyranoside 3-phosphate in the mycothiol biosynthesis pathway. In Mycobacterium ulcerans (strain Agy99), this protein is D-inositol 3-phosphate glycosyltransferase.